A 551-amino-acid polypeptide reads, in one-letter code: Glucans biosynthesis protein D (551 aa).

The tat-type signal signal peptide spans 1 to 32 (MDRRRFIKGSMAMAAVCGTSGIASLFSQAAFA).

The protein belongs to the OpgD/OpgG family. In terms of processing, predicted to be exported by the Tat system. The position of the signal peptide cleavage has not been experimentally proven.

Its subcellular location is the periplasm. It participates in glycan metabolism; osmoregulated periplasmic glucan (OPG) biosynthesis. Its function is as follows. Probably involved in the control of the structural glucose backbone of osmoregulated periplasmic glucans (OPGs). This is Glucans biosynthesis protein D from Escherichia coli O1:K1 / APEC.